Here is a 279-residue protein sequence, read N- to C-terminus: Phosphatidylglycerol--prolipoprotein diacylglyceryl transferase (279 aa).

Helical transmembrane passes span 18–38 (LSVR…YFVA), 55–75 (IIFY…VIFQ), and 89–109 (IWHG…AGVI). R137 provides a ligand contact to a 1,2-diacyl-sn-glycero-3-phospho-(1'-sn-glycerol). Transmembrane regions (helical) follow at residues 203 to 223 (LGET…FIEG) and 235 to 255 (IRVA…LIVY).

This sequence belongs to the Lgt family.

The protein resides in the cell membrane. It carries out the reaction L-cysteinyl-[prolipoprotein] + a 1,2-diacyl-sn-glycero-3-phospho-(1'-sn-glycerol) = an S-1,2-diacyl-sn-glyceryl-L-cysteinyl-[prolipoprotein] + sn-glycerol 1-phosphate + H(+). The protein operates within protein modification; lipoprotein biosynthesis (diacylglyceryl transfer). Catalyzes the transfer of the diacylglyceryl group from phosphatidylglycerol to the sulfhydryl group of the N-terminal cysteine of a prolipoprotein, the first step in the formation of mature lipoproteins. The chain is Phosphatidylglycerol--prolipoprotein diacylglyceryl transferase from Staphylococcus aureus (strain bovine RF122 / ET3-1).